The chain runs to 222 residues: MTELDYQGTAEAASTSYSRNQTDLKPFPSAGSASSSIKTTEPVKDHRRRRSSSIISHVEPETFEDENDQQLLPNMNATWVDQRGAWIIHVVIIILLKLFYNLFPGVTTEWSWTLTNMTYVIGSYVMFHLIKGTPFDFNGGAYDNLTMWEQIDDETLYTPSRKFLISVPIALFLVSTHYAHYDLKLFSWNCFLTTFGAVVPKLPVTHRLRISIPGITGRAQIS.

The tract at residues 1 to 57 is disordered; that stretch reads MTELDYQGTAEAASTSYSRNQTDLKPFPSAGSASSSIKTTEPVKDHRRRRSSSIISH. The Cytoplasmic segment spans residues 1 to 85; it reads MTELDYQGTA…NATWVDQRGA (85 aa). A compositionally biased stretch (polar residues) spans 12–23; sequence AASTSYSRNQTD. Phosphoserine occurs at positions 29, 32, and 56. Residues 86-106 form a helical membrane-spanning segment; it reads WIIHVVIIILLKLFYNLFPGV. Residues 107-109 are Extracellular-facing; sequence TTE. The helical transmembrane segment at 110-130 threads the bilayer; that stretch reads WSWTLTNMTYVIGSYVMFHLI. Topologically, residues 131 to 162 are cytoplasmic; the sequence is KGTPFDFNGGAYDNLTMWEQIDDETLYTPSRK. A helical transmembrane segment spans residues 163–183; sequence FLISVPIALFLVSTHYAHYDL. A topological domain (extracellular) is located at residue K184. The chain crosses the membrane as a helical span at residues 185 to 205; the sequence is LFSWNCFLTTFGAVVPKLPVT. The Cytoplasmic portion of the chain corresponds to 206 to 222; the sequence is HRLRISIPGITGRAQIS.

This sequence belongs to the ORM family. As to quaternary structure, component of the SPOTS complex, at least composed of LCB1/2 (LCB1 and/or LCB2), ORM1/2 (ORM1 and/or ORM2), SAC1 and TSC3. Phosphorylated in case of disruption of sphingolipid synthesis. Phosphorylation regulates inhibitory activity of serine palmitoyltransferases (LCB1 and LCB2).

It localises to the endoplasmic reticulum membrane. Functionally, component of the SPOTS complex that acts as a negative regulator of sphingolipid synthesis. Acts by inhibiting serine palmitoyltransferases (LCB1 and LCB2) activity. Along with ORM2, plays a role in the phosphorylation of LAC1 and YPK1, the distribution of actin patches between mother and daughter cells, and in endocytosis. Disruption or inhibition of sphingolipid synthesis leads to the activation and phosphorylation of YPK1 through the TORC2 and PKH1 pathways, which in turn phosphorylates ORM1 and LAG1 to activate sphingolipid synthesis. This chain is Protein ORM1 (ORM1), found in Saccharomyces cerevisiae (strain ATCC 204508 / S288c) (Baker's yeast).